A 349-amino-acid chain; its full sequence is Alanine racemase (349 aa).

The active-site Proton acceptor; specific for D-alanine is the K35. An N6-(pyridoxal phosphate)lysine modification is found at K35. R130 lines the substrate pocket. Residue Y244 is the Proton acceptor; specific for L-alanine of the active site. M292 is a substrate binding site.

The protein belongs to the alanine racemase family. Pyridoxal 5'-phosphate serves as cofactor.

The enzyme catalyses L-alanine = D-alanine. It participates in amino-acid biosynthesis; D-alanine biosynthesis; D-alanine from L-alanine: step 1/1. Catalyzes the interconversion of L-alanine and D-alanine. May also act on other amino acids. The polypeptide is Alanine racemase (alr) (Cereibacter sphaeroides (strain ATCC 17025 / ATH 2.4.3) (Rhodobacter sphaeroides)).